A 399-amino-acid chain; its full sequence is Tryptophan synthase beta chain (399 aa).

At Lys91 the chain carries N6-(pyridoxal phosphate)lysine.

The protein belongs to the TrpB family. As to quaternary structure, tetramer of two alpha and two beta chains. Pyridoxal 5'-phosphate is required as a cofactor.

The catalysed reaction is (1S,2R)-1-C-(indol-3-yl)glycerol 3-phosphate + L-serine = D-glyceraldehyde 3-phosphate + L-tryptophan + H2O. The protein operates within amino-acid biosynthesis; L-tryptophan biosynthesis; L-tryptophan from chorismate: step 5/5. In terms of biological role, the beta subunit is responsible for the synthesis of L-tryptophan from indole and L-serine. The protein is Tryptophan synthase beta chain of Shouchella clausii (strain KSM-K16) (Alkalihalobacillus clausii).